A 321-amino-acid polypeptide reads, in one-letter code: L-carnitine dehydrogenase (321 aa).

Gly14–Gly19 provides a ligand contact to NAD(+).

This sequence belongs to the 3-hydroxyacyl-CoA dehydrogenase family. L-carnitine dehydrogenase subfamily. In terms of assembly, homodimer.

It localises to the cytoplasm. The catalysed reaction is carnitine + NAD(+) = 3-dehydrocarnitine + NADH + H(+). It participates in amine and polyamine metabolism; carnitine metabolism. In terms of biological role, catalyzes the NAD(+)-dependent oxidation of L-carnitine to 3-dehydrocarnitine. This Pseudomonas putida (strain ATCC 47054 / DSM 6125 / CFBP 8728 / NCIMB 11950 / KT2440) protein is L-carnitine dehydrogenase.